The primary structure comprises 130 residues: Small ribosomal subunit protein uS8 (130 aa).

This sequence belongs to the universal ribosomal protein uS8 family. Part of the 30S ribosomal subunit. Contacts proteins S5 and S12.

In terms of biological role, one of the primary rRNA binding proteins, it binds directly to 16S rRNA central domain where it helps coordinate assembly of the platform of the 30S subunit. This Aliivibrio fischeri (strain ATCC 700601 / ES114) (Vibrio fischeri) protein is Small ribosomal subunit protein uS8.